Reading from the N-terminus, the 97-residue chain is MSYYRWDGDDLILDCHLQPKASSDEFAGLHGERLKIRLTAPPVEGKANAHLMAFLAKAFGIPKSNVSLVSGELNRQKRVRLQAPKKLPDLPGLARPA.

It belongs to the UPF0235 family.

The polypeptide is UPF0235 protein PFL_5841 (Pseudomonas fluorescens (strain ATCC BAA-477 / NRRL B-23932 / Pf-5)).